The following is a 391-amino-acid chain: uncharacterized protein (391 aa).

This is an uncharacterized protein from Methanocaldococcus jannaschii (strain ATCC 43067 / DSM 2661 / JAL-1 / JCM 10045 / NBRC 100440) (Methanococcus jannaschii).